A 67-amino-acid polypeptide reads, in one-letter code: Conotoxin Cl6.10 (67 aa).

Positions 1–24 are cleaved as a signal peptide; sequence MKLTCVLIAAVLLLAVCQLDSADA. The propeptide occupies 25–37; it reads TAYMRKDPSLRSP. Disulfide bonds link cysteine 43–cysteine 57, cysteine 50–cysteine 61, and cysteine 56–cysteine 65.

This sequence belongs to the conotoxin O1 superfamily. Expressed by the venom duct.

It localises to the secreted. The protein is Conotoxin Cl6.10 of Californiconus californicus (California cone).